Consider the following 110-residue polypeptide: Putative zinc finger protein ORF110 (110 aa).

The C2H2-type zinc finger occupies 3–26 (YVCTACKLKFHTFEEFKIHVHLFH).

This is Putative zinc finger protein ORF110 from Acidianus filamentous virus 1 (isolate United States/Yellowstone) (AFV-1).